Here is a 174-residue protein sequence, read N- to C-terminus: Small ribosomal subunit protein uS5 (174 aa).

Residues 19-82 (LREKMIAVNR…EQARRGMFKV (64 aa)) form the S5 DRBM domain.

Belongs to the universal ribosomal protein uS5 family. Part of the 30S ribosomal subunit. Contacts proteins S4 and S8.

Functionally, with S4 and S12 plays an important role in translational accuracy. In terms of biological role, located at the back of the 30S subunit body where it stabilizes the conformation of the head with respect to the body. The sequence is that of Small ribosomal subunit protein uS5 from Bordetella bronchiseptica (strain ATCC BAA-588 / NCTC 13252 / RB50) (Alcaligenes bronchisepticus).